The chain runs to 950 residues: Protocadherin alpha-6 (950 aa).

An N-terminal signal peptide occupies residues 1–29 (MVFTPEDRLGKQCLLLPLLLLAAWKVGSG). Topologically, residues 30–697 (QLHYSVPEEA…GPEAALVDVN (668 aa)) are extracellular. Cadherin domains lie at 34–133 (SVPE…PPLF), 157–242 (ASDA…APTF), 243–350 (EQSE…VPEI), 351–455 (ALTS…APAF), 456–565 (AQPE…APAL), and 581–678 (VPRS…APKA). 4 N-linked (GlcNAc...) asparagine glycosylation sites follow: Asn257, Asn265, Asn386, and Asn548. Residues 698-718 (VYLIIAICAVSSLLVLTLLLY) traverse the membrane as a helical segment. The Cytoplasmic segment spans residues 719–950 (TALRCSAPPT…GNSTTDNSDQ (232 aa)). 4 PXXP repeats span residues 799-802 (PRQP), 832-835 (PGGP), 873-876 (PGNP), and 891-894 (PGSP). The segment at 799–894 (PRQPNPDWRY…PDKFIIPGSP (96 aa)) is 4 X 4 AA repeats of P-X-X-P. Residues 830 to 950 (AGPGGPDQQW…GNSTTDNSDQ (121 aa)) form a disordered region. A compositionally biased stretch (basic and acidic residues) spans 909–923 (DKSDFITFGKKEETK).

It is found in the cell membrane. The protein localises to the secreted. In terms of biological role, potential calcium-dependent cell-adhesion protein. May be involved in the establishment and maintenance of specific neuronal connections in the brain. This Homo sapiens (Human) protein is Protocadherin alpha-6 (PCDHA6).